A 202-amino-acid polypeptide reads, in one-letter code: ATP-dependent Clp protease proteolytic subunit (202 aa).

Ser106 acts as the Nucleophile in catalysis. Residue His131 is part of the active site.

It belongs to the peptidase S14 family. As to quaternary structure, fourteen ClpP subunits assemble into 2 heptameric rings which stack back to back to give a disk-like structure with a central cavity, resembling the structure of eukaryotic proteasomes.

The protein resides in the cytoplasm. It carries out the reaction Hydrolysis of proteins to small peptides in the presence of ATP and magnesium. alpha-casein is the usual test substrate. In the absence of ATP, only oligopeptides shorter than five residues are hydrolyzed (such as succinyl-Leu-Tyr-|-NHMec, and Leu-Tyr-Leu-|-Tyr-Trp, in which cleavage of the -Tyr-|-Leu- and -Tyr-|-Trp bonds also occurs).. In terms of biological role, cleaves peptides in various proteins in a process that requires ATP hydrolysis. Has a chymotrypsin-like activity. Plays a major role in the degradation of misfolded proteins. The polypeptide is ATP-dependent Clp protease proteolytic subunit (Acidovorax ebreus (strain TPSY) (Diaphorobacter sp. (strain TPSY))).